Reading from the N-terminus, the 366-residue chain is Ribosomal RNA large subunit methyltransferase M (366 aa).

S-adenosyl-L-methionine is bound by residues S188, 221 to 224 (CPGG), D240, D260, and D277. K306 functions as the Proton acceptor in the catalytic mechanism.

This sequence belongs to the class I-like SAM-binding methyltransferase superfamily. RNA methyltransferase RlmE family. RlmM subfamily. Monomer.

It is found in the cytoplasm. It carries out the reaction cytidine(2498) in 23S rRNA + S-adenosyl-L-methionine = 2'-O-methylcytidine(2498) in 23S rRNA + S-adenosyl-L-homocysteine + H(+). Its function is as follows. Catalyzes the 2'-O-methylation at nucleotide C2498 in 23S rRNA. The polypeptide is Ribosomal RNA large subunit methyltransferase M (Salmonella gallinarum (strain 287/91 / NCTC 13346)).